The following is a 255-amino-acid chain: tRNA pseudouridine synthase A (255 aa).

Asp56 acts as the Nucleophile in catalysis. Tyr114 lines the substrate pocket.

Belongs to the tRNA pseudouridine synthase TruA family. In terms of assembly, homodimer.

It catalyses the reaction uridine(38/39/40) in tRNA = pseudouridine(38/39/40) in tRNA. Functionally, formation of pseudouridine at positions 38, 39 and 40 in the anticodon stem and loop of transfer RNAs. In Methylacidiphilum infernorum (isolate V4) (Methylokorus infernorum (strain V4)), this protein is tRNA pseudouridine synthase A.